The primary structure comprises 324 residues: Leucine carboxyl methyltransferase 1 (324 aa).

Residues Arg74, Gly101, Asp128, 172 to 173 (DL), and Glu196 each bind S-adenosyl-L-methionine.

Belongs to the methyltransferase superfamily. LCMT family.

The enzyme catalyses [phosphatase 2A protein]-C-terminal L-leucine + S-adenosyl-L-methionine = [phosphatase 2A protein]-C-terminal L-leucine methyl ester + S-adenosyl-L-homocysteine. Functionally, methylates the carboxyl group of the C-terminal leucine residue of protein phosphatase 2A catalytic subunits to form alpha-leucine ester residues. The protein is Leucine carboxyl methyltransferase 1 (PPM1) of Yarrowia lipolytica (strain CLIB 122 / E 150) (Yeast).